The following is a 572-amino-acid chain: MRTSQYLLSTLKETPADAEVISHQLMLRAGMIRKLASGLYTWLPTGVRVLKKVENIVREEMNNAGAIEVSMPVVQPADLWQESGRWEQYGPELLRFVDRGERPFVLGPTHEEVITDLIRNELSSYKQLPLNFYQIQTKFRDEVRPRFGVMRSREFLMKDAYSFHTSQESLQETYDAMYAAYSKIFSRIGLDFRAVQADTGSIGGSASHEFQVLAQSGEDDVVFSDTSDYAANIELAEAIAPKEPRAAATQEMTLVDTPNAKTIAELVEQFNLPIEKTVKTLLVKAVEGSSFPLVALLVRGDHELNEVKAEKLPQVASPLTFATEEEIRAVVKAGPGSLGPVNMPIPVVIDRTVAAMSDFAAGANIDGKHYFGINWDRDVATPEVADIRNVVAGDPSPDGQGTLLIKRGIEVGHIFQLGTKYSEALKASVQGEDGRNQILTMGCYGIGVTRVVAAAIEQNYDERGIVWPDAIAPFQVAILPMNMHKSFRVQELAEKLYSELRAQGIEVLLDDRKERPGVMFADMELIGIPHTIVLGDRNLDNDDIEYKYRRNGEKQLIKTGDIVEYLVKQIKG.

This sequence belongs to the class-II aminoacyl-tRNA synthetase family. ProS type 1 subfamily. Homodimer.

Its subcellular location is the cytoplasm. It catalyses the reaction tRNA(Pro) + L-proline + ATP = L-prolyl-tRNA(Pro) + AMP + diphosphate. Catalyzes the attachment of proline to tRNA(Pro) in a two-step reaction: proline is first activated by ATP to form Pro-AMP and then transferred to the acceptor end of tRNA(Pro). As ProRS can inadvertently accommodate and process non-cognate amino acids such as alanine and cysteine, to avoid such errors it has two additional distinct editing activities against alanine. One activity is designated as 'pretransfer' editing and involves the tRNA(Pro)-independent hydrolysis of activated Ala-AMP. The other activity is designated 'posttransfer' editing and involves deacylation of mischarged Ala-tRNA(Pro). The misacylated Cys-tRNA(Pro) is not edited by ProRS. The polypeptide is Proline--tRNA ligase (Escherichia coli O139:H28 (strain E24377A / ETEC)).